Consider the following 189-residue polypeptide: MSSESTAIFTPIIDALHNQQVIAYPTEAVFGLGCDPDSEQAVNALLALKQRPWEKGLILIAADYAQLTPYIDDTALNEQQRATMFASWPGPVTWVIPARSETSRLLTGRFNSLAVRVSDHPLVQQLCRQFGKPLVSTSANLSGQEPCRSADEVQQQFGAAFPLLAGSVGGRLNPSEIRDVLTGEQIRQG.

The YrdC-like domain occupies 6-189 (TAIFTPIIDA…VLTGEQIRQG (184 aa)).

This sequence belongs to the SUA5 family. TsaC subfamily.

The protein resides in the cytoplasm. It carries out the reaction L-threonine + hydrogencarbonate + ATP = L-threonylcarbamoyladenylate + diphosphate + H2O. Functionally, required for the formation of a threonylcarbamoyl group on adenosine at position 37 (t(6)A37) in tRNAs that read codons beginning with adenine. Catalyzes the conversion of L-threonine, HCO(3)(-)/CO(2) and ATP to give threonylcarbamoyl-AMP (TC-AMP) as the acyladenylate intermediate, with the release of diphosphate. This chain is Threonylcarbamoyl-AMP synthase, found in Serratia proteamaculans (strain 568).